Here is a 311-residue protein sequence, read N- to C-terminus: Cell division control protein 2 homolog 3 (311 aa).

Positions 23 to 306 (YNRMDILGEG…AKAALQHPWF (284 aa)) constitute a Protein kinase domain. ATP contacts are provided by residues 29 to 37 (LGEGTYGVV) and K52. T33 bears the Phosphothreonine mark. A Phosphotyrosine modification is found at Y34. The Proton acceptor role is filled by D145.

The protein belongs to the protein kinase superfamily. CMGC Ser/Thr protein kinase family. CDC2/CDKX subfamily. In terms of assembly, forms a stable but non-covalent complex with a regulatory subunit and with a cyclin.

The catalysed reaction is L-seryl-[protein] + ATP = O-phospho-L-seryl-[protein] + ADP + H(+). It catalyses the reaction L-threonyl-[protein] + ATP = O-phospho-L-threonyl-[protein] + ADP + H(+). Its activity is regulated as follows. Phosphorylation at Thr-33 or Tyr-34 inactivates the enzyme. Probably involved in the control of the cell cycle. The polypeptide is Cell division control protein 2 homolog 3 (CRK3) (Trypanosoma brucei brucei).